A 172-amino-acid polypeptide reads, in one-letter code: Large ribosomal subunit protein bL9 (172 aa).

This sequence belongs to the bacterial ribosomal protein bL9 family.

Functionally, binds to the 23S rRNA. In Chlamydia abortus (strain DSM 27085 / S26/3) (Chlamydophila abortus), this protein is Large ribosomal subunit protein bL9.